We begin with the raw amino-acid sequence, 465 residues long: Chromosomal replication initiator protein DnaA (465 aa).

Residues 1–84 (MSLSLWQQCL…RFEVGSKPLV (84 aa)) form a domain I, interacts with DnaA modulators region. Residues 84 to 128 (VQTISQPAQSHHNPVSVARQQPVRMAPVRPSWDNSPVQAEHTYRS) form a domain II region. Residues 129-345 (NVNPKHTFDN…GALNRVIANA (217 aa)) form a domain III, AAA+ region region. Glycine 173, glycine 175, lysine 176, and threonine 177 together coordinate ATP. The segment at 346 to 465 (NFTGRSITID…FSNLIRTLSS (120 aa)) is domain IV, binds dsDNA.

The protein belongs to the DnaA family. As to quaternary structure, oligomerizes as a right-handed, spiral filament on DNA at oriC.

The protein localises to the cytoplasm. Plays an essential role in the initiation and regulation of chromosomal replication. ATP-DnaA binds to the origin of replication (oriC) to initiate formation of the DNA replication initiation complex once per cell cycle. Binds the DnaA box (a 9 base pair repeat at the origin) and separates the double-stranded (ds)DNA. Forms a right-handed helical filament on oriC DNA; dsDNA binds to the exterior of the filament while single-stranded (ss)DNA is stabiized in the filament's interior. The ATP-DnaA-oriC complex binds and stabilizes one strand of the AT-rich DNA unwinding element (DUE), permitting loading of DNA polymerase. After initiation quickly degrades to an ADP-DnaA complex that is not apt for DNA replication. Binds acidic phospholipids. The protein is Chromosomal replication initiator protein DnaA of Pectobacterium atrosepticum (strain SCRI 1043 / ATCC BAA-672) (Erwinia carotovora subsp. atroseptica).